Here is a 201-residue protein sequence, read N- to C-terminus: Recombination protein RecR (201 aa).

Residues 58–73 (CGRCGALTDVDPCGIC) form a C4-type zinc finger. The Toprim domain maps to 81–178 (ETLCLVSEWD…RVTRLAQGIP (98 aa)).

It belongs to the RecR family.

Functionally, may play a role in DNA repair. It seems to be involved in an RecBC-independent recombinational process of DNA repair. It may act with RecF and RecO. The chain is Recombination protein RecR from Nitratidesulfovibrio vulgaris (strain DSM 19637 / Miyazaki F) (Desulfovibrio vulgaris).